The following is a 473-amino-acid chain: Cholesterol 22-monohydroxylase CYP90B52 (473 aa).

The chain crosses the membrane as a helical span at residues Glu-2–Ile-22. Heme is bound at residue Cys-422.

The protein belongs to the cytochrome P450 family. As to expression, mainly expressed in leaves and roots and, at low levels, in fruits and stems.

The protein resides in the membrane. The catalysed reaction is cholesterol + reduced [NADPH--hemoprotein reductase] + O2 = (22S)-22-hydroxycholesterol + oxidized [NADPH--hemoprotein reductase] + H2O + H(+). Its pathway is steroid metabolism; cholesterol metabolism. In terms of biological role, canonical brassinosteroid (BR)-biosynthetic enzyme capable of converting cholesterol to 22S-hydroxycholesterol via sterol-C22 hydroxylation. The protein is Cholesterol 22-monohydroxylase CYP90B52 of Paris polyphylla (Daiswa polyphylla).